The sequence spans 61 residues: Sec-independent protein translocase protein TatA (61 aa).

A helical membrane pass occupies residues 2-22; that stretch reads GLSGISPLSLLLILAIIVALF.

Belongs to the TatA/E family. The Tat system comprises two distinct complexes: a TatABC complex, containing multiple copies of TatA, TatB and TatC subunits, and a separate TatA complex, containing only TatA subunits. Substrates initially bind to the TatABC complex, which probably triggers association of the separate TatA complex to form the active translocon.

The protein localises to the cell inner membrane. Part of the twin-arginine translocation (Tat) system that transports large folded proteins containing a characteristic twin-arginine motif in their signal peptide across membranes. TatA could form the protein-conducting channel of the Tat system. The chain is Sec-independent protein translocase protein TatA from Legionella pneumophila (strain Corby).